A 263-amino-acid chain; its full sequence is Glucosamine-6-phosphate deaminase (263 aa).

Aspartate 72 (proton acceptor; for enolization step) is an active-site residue. The active-site For ring-opening step is aspartate 141. Histidine 143 acts as the Proton acceptor; for ring-opening step in catalysis. Glutamate 148 serves as the catalytic For ring-opening step.

This sequence belongs to the glucosamine/galactosamine-6-phosphate isomerase family. NagB subfamily.

It carries out the reaction alpha-D-glucosamine 6-phosphate + H2O = beta-D-fructose 6-phosphate + NH4(+). It participates in amino-sugar metabolism; N-acetylneuraminate degradation; D-fructose 6-phosphate from N-acetylneuraminate: step 5/5. Allosterically activated by N-acetylglucosamine 6-phosphate (GlcNAc6P). Its function is as follows. Catalyzes the reversible isomerization-deamination of glucosamine 6-phosphate (GlcN6P) to form fructose 6-phosphate (Fru6P) and ammonium ion. This Phocaeicola vulgatus (strain ATCC 8482 / DSM 1447 / JCM 5826 / CCUG 4940 / NBRC 14291 / NCTC 11154) (Bacteroides vulgatus) protein is Glucosamine-6-phosphate deaminase.